Consider the following 236-residue polypeptide: tRNA1(Val) (adenine(37)-N6)-methyltransferase (236 aa).

This sequence belongs to the methyltransferase superfamily. tRNA (adenine-N(6)-)-methyltransferase family.

The protein localises to the cytoplasm. The catalysed reaction is adenosine(37) in tRNA1(Val) + S-adenosyl-L-methionine = N(6)-methyladenosine(37) in tRNA1(Val) + S-adenosyl-L-homocysteine + H(+). Its function is as follows. Specifically methylates the adenine in position 37 of tRNA(1)(Val) (anticodon cmo5UAC). This chain is tRNA1(Val) (adenine(37)-N6)-methyltransferase, found in Actinobacillus pleuropneumoniae serotype 7 (strain AP76).